A 200-amino-acid polypeptide reads, in one-letter code: Small ribosomal subunit protein uS5 (200 aa).

Positions 1-22 are enriched in basic and acidic residues; it reads MAEERGEKRGRRRDRENPRDRD. The tract at residues 1–26 is disordered; that stretch reads MAEERGEKRGRRRDRENPRDRDDESS. The S5 DRBM domain occupies 28 to 91; that stretch reads LVDKLVGINR…EEAKRNLVRI (64 aa).

This sequence belongs to the universal ribosomal protein uS5 family. In terms of assembly, part of the 30S ribosomal subunit. Contacts proteins S4 and S8.

With S4 and S12 plays an important role in translational accuracy. In terms of biological role, located at the back of the 30S subunit body where it stabilizes the conformation of the head with respect to the body. The sequence is that of Small ribosomal subunit protein uS5 from Hyphomonas neptunium (strain ATCC 15444).